A 152-amino-acid chain; its full sequence is Small ribosomal subunit protein uS11A (152 aa).

A disordered region spans residues 131-152 (EDVTPIPSDSTRRKGGRRGRRL). Over residues 143 to 152 (RKGGRRGRRL) the composition is skewed to basic residues.

It belongs to the universal ribosomal protein uS11 family.

This Anopheles gambiae (African malaria mosquito) protein is Small ribosomal subunit protein uS11A.